The following is a 350-amino-acid chain: 4-hydroxy-3-methylbut-2-enyl diphosphate reductase (350 aa).

Position 36 (cysteine 36) interacts with [4Fe-4S] cluster. (2E)-4-hydroxy-3-methylbut-2-enyl diphosphate is bound by residues histidine 65 and histidine 101. Dimethylallyl diphosphate-binding residues include histidine 65 and histidine 101. 2 residues coordinate isopentenyl diphosphate: histidine 65 and histidine 101. Position 123 (cysteine 123) interacts with [4Fe-4S] cluster. A (2E)-4-hydroxy-3-methylbut-2-enyl diphosphate-binding site is contributed by histidine 151. Histidine 151 contributes to the dimethylallyl diphosphate binding site. Histidine 151 provides a ligand contact to isopentenyl diphosphate. The Proton donor role is filled by glutamate 153. Residue threonine 192 coordinates (2E)-4-hydroxy-3-methylbut-2-enyl diphosphate. Cysteine 222 is a [4Fe-4S] cluster binding site. The (2E)-4-hydroxy-3-methylbut-2-enyl diphosphate site is built by serine 250, serine 251, asparagine 252, and serine 295. Dimethylallyl diphosphate contacts are provided by serine 250, serine 251, asparagine 252, and serine 295. 4 residues coordinate isopentenyl diphosphate: serine 250, serine 251, asparagine 252, and serine 295.

The protein belongs to the IspH family. Requires [4Fe-4S] cluster as cofactor.

It catalyses the reaction isopentenyl diphosphate + 2 oxidized [2Fe-2S]-[ferredoxin] + H2O = (2E)-4-hydroxy-3-methylbut-2-enyl diphosphate + 2 reduced [2Fe-2S]-[ferredoxin] + 2 H(+). The catalysed reaction is dimethylallyl diphosphate + 2 oxidized [2Fe-2S]-[ferredoxin] + H2O = (2E)-4-hydroxy-3-methylbut-2-enyl diphosphate + 2 reduced [2Fe-2S]-[ferredoxin] + 2 H(+). It functions in the pathway isoprenoid biosynthesis; dimethylallyl diphosphate biosynthesis; dimethylallyl diphosphate from (2E)-4-hydroxy-3-methylbutenyl diphosphate: step 1/1. It participates in isoprenoid biosynthesis; isopentenyl diphosphate biosynthesis via DXP pathway; isopentenyl diphosphate from 1-deoxy-D-xylulose 5-phosphate: step 6/6. Its function is as follows. Catalyzes the conversion of 1-hydroxy-2-methyl-2-(E)-butenyl 4-diphosphate (HMBPP) into a mixture of isopentenyl diphosphate (IPP) and dimethylallyl diphosphate (DMAPP). Acts in the terminal step of the DOXP/MEP pathway for isoprenoid precursor biosynthesis. The protein is 4-hydroxy-3-methylbut-2-enyl diphosphate reductase of Rhizobium meliloti (strain 1021) (Ensifer meliloti).